Consider the following 401-residue polypeptide: uncharacterized protein (401 aa).

Positions 7, 13, 16, and 94 each coordinate [4Fe-4S] cluster. 4 residues coordinate S-adenosyl-L-methionine: glutamine 230, tyrosine 259, glutamate 280, and aspartate 328. The Nucleophile role is filled by cysteine 355.

This sequence belongs to the class I-like SAM-binding methyltransferase superfamily. RNA M5U methyltransferase family.

This is an uncharacterized protein from Chlamydia pneumoniae (Chlamydophila pneumoniae).